Consider the following 142-residue polypeptide: Transcriptional regulator MraZ (142 aa).

2 consecutive SpoVT-AbrB domains span residues 5 to 47 and 76 to 119; these read EYNH…PLGE and ANEV…SKEK.

The protein belongs to the MraZ family. In terms of assembly, forms oligomers.

The protein resides in the cytoplasm. It is found in the nucleoid. The chain is Transcriptional regulator MraZ from Clostridium acetobutylicum (strain ATCC 824 / DSM 792 / JCM 1419 / IAM 19013 / LMG 5710 / NBRC 13948 / NRRL B-527 / VKM B-1787 / 2291 / W).